Reading from the N-terminus, the 78-residue chain is Large ribosomal subunit protein bL28 (78 aa).

The disordered stretch occupies residues 1–21; sequence MSRVCQLSGKRANNGMAVSHS.

The protein belongs to the bacterial ribosomal protein bL28 family.

The polypeptide is Large ribosomal subunit protein bL28 (Synechococcus sp. (strain RCC307)).